The primary structure comprises 125 residues: Fluoride-specific ion channel FluC (125 aa).

Transmembrane regions (helical) follow at residues 2–22 (WLSI…RTGF), 35–55 (LGTL…LAFF), 68–88 (LIIT…AEVV), and 98–118 (WALG…LLGI). Na(+) is bound by residues Gly-75 and Thr-78.

The protein belongs to the fluoride channel Fluc/FEX (TC 1.A.43) family.

The protein resides in the cell inner membrane. The enzyme catalyses fluoride(in) = fluoride(out). With respect to regulation, na(+) is not transported, but it plays an essential structural role and its presence is essential for fluoride channel function. Functionally, fluoride-specific ion channel. Important for reducing fluoride concentration in the cell, thus reducing its toxicity. The chain is Fluoride-specific ion channel FluC from Polynucleobacter asymbioticus (strain DSM 18221 / CIP 109841 / QLW-P1DMWA-1) (Polynucleobacter necessarius subsp. asymbioticus).